Here is a 215-residue protein sequence, read N- to C-terminus: Sodium channel regulatory subunit beta-2 (215 aa).

The signal sequence occupies residues 1–29 (MHRDAWLPRPAFSLTGLSLFFSLVPPGRS). Residues 30–157 (MEVTVPATLN…MEEPPERDST (128 aa)) are Extracellular-facing. One can recognise an Ig-like C2-type domain in the interval 32-154 (VTVPATLNVL…QVLMEEPPER (123 aa)). N-linked (GlcNAc...) asparagine glycans are attached at residues asparagine 42, asparagine 66, and asparagine 74. 2 disulfide bridges follow: cysteine 50-cysteine 127 and cysteine 72-cysteine 75. A helical transmembrane segment spans residues 158-179 (VAVIVGASVGGFLAVVILVLMV). The Cytoplasmic portion of the chain corresponds to 180 to 215 (VKCVRRKKEQKLSTDDLKTEEEGKTDGEGNPDDGAK). A disordered region spans residues 187 to 215 (KEQKLSTDDLKTEEEGKTDGEGNPDDGAK). Residues 189-215 (QKLSTDDLKTEEEGKTDGEGNPDDGAK) show a composition bias toward basic and acidic residues. Phosphoserine is present on serine 192. The residue at position 204 (threonine 204) is a Phosphothreonine.

Belongs to the sodium channel auxiliary subunit SCN2B (TC 8.A.17) family. A voltage-gated sodium (Nav) channel consists of an ion-conducting pore-forming alpha subunit functional on its own that is regulated by one or more beta subunits. The beta subunit SCN2B is disulfide-linked to the pore-forming alpha subunit. Interacts with SCN1A; regulatory subunit of SCN1A/Nav1.1. Interacts with SCN2A; regulatory subunit of SCN2A/Nav1.2. Interacts with SCN3A; regulatory subunit of SCN3A/Nav1.3. Interacts with SCN5A; regulatory subunit of SCN5A/Nav1.5. Interacts with SCN8A; regulatory subunit of SCN8A/Nav1.6. Interacts with SCN9A; regulatory subunit of SCN9A/Nav1.7. Interacts with SCN10A; regulatory subunit of SCN10A/Nav1.8. Interacts with TNR; may play a crucial role in clustering and regulation of activity of SCN2B-containing Nav channels at nodes of Ranvier.

The protein localises to the cell membrane. Its subcellular location is the cell projection. It localises to the axon. Its function is as follows. Regulatory subunit of multiple voltage-gated sodium (Nav) channels directly mediating the depolarization of excitable membranes. Navs, also called VGSCs (voltage-gated sodium channels) or VDSCs (voltage-dependent sodium channels), operate by switching between closed and open conformations depending on the voltage difference across the membrane. In the open conformation they allow Na(+) ions to selectively pass through the pore, along their electrochemical gradient. The influx of Na+ ions provokes membrane depolarization, initiating the propagation of electrical signals throughout cells and tissues. The accessory beta subunits participate in localization and functional modulation of the Nav channels. Modulates the activity of SCN1A/Nav1.1, SCN2A/Nav1.2, SCN2A/Nav1.3, SCN5A/Nav1.5, SCN8A/Nav1.6, SCN9A/Nav1.7 and SCN10A/Nav1.8. The sequence is that of Sodium channel regulatory subunit beta-2 from Homo sapiens (Human).